Reading from the N-terminus, the 535-residue chain is CTP synthase (535 aa).

An amidoligase domain region spans residues M1–L270. S16 is a binding site for CTP. S16 lines the UTP pocket. ATP is bound at residue S17–I22. Y57 lines the L-glutamine pocket. D74 contacts ATP. Mg(2+) is bound by residues D74 and E144. CTP is bound by residues D151–E153, K191–Q196, and K227. Residues K191–Q196 and K227 contribute to the UTP site. The region spanning K295–K535 is the Glutamine amidotransferase type-1 domain. An L-glutamine-binding site is contributed by G357. Residue C384 is the Nucleophile; for glutamine hydrolysis of the active site. L-glutamine contacts are provided by residues L385–Q388, E408, and R465. Catalysis depends on residues H510 and E512.

The protein belongs to the CTP synthase family. Homotetramer.

It carries out the reaction UTP + L-glutamine + ATP + H2O = CTP + L-glutamate + ADP + phosphate + 2 H(+). The catalysed reaction is L-glutamine + H2O = L-glutamate + NH4(+). The enzyme catalyses UTP + NH4(+) + ATP = CTP + ADP + phosphate + 2 H(+). The protein operates within pyrimidine metabolism; CTP biosynthesis via de novo pathway; CTP from UDP: step 2/2. Allosterically activated by GTP, when glutamine is the substrate; GTP has no effect on the reaction when ammonia is the substrate. The allosteric effector GTP functions by stabilizing the protein conformation that binds the tetrahedral intermediate(s) formed during glutamine hydrolysis. Inhibited by the product CTP, via allosteric rather than competitive inhibition. Its function is as follows. Catalyzes the ATP-dependent amination of UTP to CTP with either L-glutamine or ammonia as the source of nitrogen. Regulates intracellular CTP levels through interactions with the four ribonucleotide triphosphates. This is CTP synthase from Clostridium perfringens (strain ATCC 13124 / DSM 756 / JCM 1290 / NCIMB 6125 / NCTC 8237 / Type A).